A 321-amino-acid polypeptide reads, in one-letter code: AA9 family lytic polysaccharide monooxygenase C (321 aa).

The first 18 residues, 1–18 (MKLQLIIPFSFLISYVSA), serve as a signal peptide directing secretion. Position 19 (His-19) interacts with Cu(2+). Residue Asn-33 is glycosylated (N-linked (GlcNAc...) asparagine). 2 disulfides stabilise this stretch: Cys-57–Cys-191 and Cys-161–Cys-242. Residue His-103 participates in Cu(2+) binding. O2-binding residues include His-177 and Gln-186. A Cu(2+)-binding site is contributed by Tyr-188. N-linked (GlcNAc...) asparagine glycosylation is present at Asn-195. Residues 283–319 (GTAAIYAQCGGQGWTGATVCASGSKCVVSSAFYSQCL) enclose the CBM1 domain.

Belongs to the polysaccharide monooxygenase AA9 family. The cofactor is Cu(2+).

The protein localises to the secreted. The catalysed reaction is [(1-&gt;4)-beta-D-glucosyl]n+m + reduced acceptor + O2 = 4-dehydro-beta-D-glucosyl-[(1-&gt;4)-beta-D-glucosyl]n-1 + [(1-&gt;4)-beta-D-glucosyl]m + acceptor + H2O.. In terms of biological role, major lytic polysaccharide monooxygenase (LPMO) that depolymerizes crystalline and amorphous polysaccharides via the oxidation of scissile alpha- or beta-(1-4)-glycosidic bonds, yielding C1 and C4 oxidation products. Catalysis by LPMOs requires the reduction of the active-site copper from Cu(II) to Cu(I) by a reducing agent and H(2)O(2) or O(2) as a cosubstrate. The sequence is that of AA9 family lytic polysaccharide monooxygenase C from Botryotinia fuckeliana (strain B05.10) (Noble rot fungus).